The chain runs to 268 residues: Glucosamine-6-phosphate deaminase (268 aa).

Aspartate 67 functions as the Proton acceptor; for enolization step in the catalytic mechanism. Asparagine 137 acts as the For ring-opening step in catalysis. The active-site Proton acceptor; for ring-opening step is histidine 139. The For ring-opening step role is filled by glutamate 144.

This sequence belongs to the glucosamine/galactosamine-6-phosphate isomerase family. NagB subfamily. Homohexamer.

The catalysed reaction is alpha-D-glucosamine 6-phosphate + H2O = beta-D-fructose 6-phosphate + NH4(+). It participates in amino-sugar metabolism; N-acetylneuraminate degradation; D-fructose 6-phosphate from N-acetylneuraminate: step 5/5. In terms of biological role, catalyzes the reversible isomerization-deamination of glucosamine 6-phosphate (GlcN6P) to form fructose 6-phosphate (Fru6P) and ammonium ion. The polypeptide is Glucosamine-6-phosphate deaminase (Pseudoalteromonas translucida (strain TAC 125)).